The primary structure comprises 404 residues: Coenzyme F420H(2) oxidase (404 aa).

Fe cation contacts are provided by H83, E85, D87, H88, H151, D170, and H233. In terms of domain architecture, Flavodoxin-like spans 259–399 (VTVIYDTMHG…ACFEAGRKLA (141 aa)). Residues 265–270 (TMHGST), 317–320 (TIYD), and 351–356 (SMGGNG) each bind FMN.

It in the N-terminal section; belongs to the zinc metallo-hydrolase group 3 family. Homodimer. Homotetramer. The tetramer is composed of two functional dimers. FMN serves as cofactor. The cofactor is Fe cation.

It catalyses the reaction 2 reduced coenzyme F420-(gamma-L-Glu)(n) + O2 = 2 oxidized coenzyme F420-(gamma-L-Glu)(n) + 2 H2O + 2 H(+). Functionally, catalyzes the oxidation of F420H(2) with O(2). May be involved in O(2) detoxification, reducing the intracellular O(2) concentration to a level allowing growth at the expense of methane formation. The protein is Coenzyme F420H(2) oxidase of Methanothermobacter marburgensis (strain ATCC BAA-927 / DSM 2133 / JCM 14651 / NBRC 100331 / OCM 82 / Marburg) (Methanobacterium thermoautotrophicum).